The primary structure comprises 200 residues: Sorting nexin-10 (200 aa).

A required for interaction with ATP6V1D region spans residues E8 to L125. The PX domain maps to F10–S127. Residues R53, K79, and R94 each contribute to the a 1,2-diacyl-sn-glycero-3-phospho-(1D-myo-inositol-3-phosphate) site. Residues F156 to D167 show a composition bias toward basic and acidic residues. The tract at residues F156–S200 is disordered.

This sequence belongs to the sorting nexin family. Interacts with ATP6V1D; may play a role in ciliogenesis.

Its subcellular location is the cytoplasm. The protein localises to the endosome membrane. It is found in the cytoskeleton. The protein resides in the microtubule organizing center. It localises to the centrosome. Its function is as follows. Probable phosphoinositide-binding protein involved in protein sorting and membrane trafficking in endosomes. Plays a role in cilium biogenesis through regulation of the transport and the localization of proteins to the cilium. Required for the localization to the cilium of V-ATPase subunit ATP6V1D and ATP6V0D1, and RAB8A. Involved in osteoclast differentiation and therefore bone resorption. The sequence is that of Sorting nexin-10 (SNX10) from Bos taurus (Bovine).